The primary structure comprises 561 residues: Glutamate--tRNA ligase (561 aa).

Positions 107 to 117 (PNPSGPLHLGH) match the 'HIGH' region motif.

The protein belongs to the class-I aminoacyl-tRNA synthetase family. Glutamate--tRNA ligase type 2 subfamily.

The protein localises to the cytoplasm. The enzyme catalyses tRNA(Glu) + L-glutamate + ATP = L-glutamyl-tRNA(Glu) + AMP + diphosphate. Its function is as follows. Catalyzes the attachment of glutamate to tRNA(Glu) in a two-step reaction: glutamate is first activated by ATP to form Glu-AMP and then transferred to the acceptor end of tRNA(Glu). The chain is Glutamate--tRNA ligase from Methanoculleus marisnigri (strain ATCC 35101 / DSM 1498 / JR1).